Here is a 377-residue protein sequence, read N- to C-terminus: 3-dehydroquinate synthase (377 aa).

Residues Gly-115 to Asp-119, Thr-139 to Ser-140, Lys-152, and Lys-161 contribute to the NAD(+) site. Residues Glu-194, His-256, and His-275 each coordinate Zn(2+).

It belongs to the sugar phosphate cyclases superfamily. Dehydroquinate synthase family. The cofactor is NAD(+). Requires Co(2+) as cofactor. Zn(2+) is required as a cofactor.

The protein localises to the cytoplasm. It catalyses the reaction 7-phospho-2-dehydro-3-deoxy-D-arabino-heptonate = 3-dehydroquinate + phosphate. The protein operates within metabolic intermediate biosynthesis; chorismate biosynthesis; chorismate from D-erythrose 4-phosphate and phosphoenolpyruvate: step 2/7. Its function is as follows. Catalyzes the conversion of 3-deoxy-D-arabino-heptulosonate 7-phosphate (DAHP) to dehydroquinate (DHQ). This Agrobacterium fabrum (strain C58 / ATCC 33970) (Agrobacterium tumefaciens (strain C58)) protein is 3-dehydroquinate synthase.